Reading from the N-terminus, the 96-residue chain is Co-chaperonin GroES (96 aa).

It belongs to the GroES chaperonin family. As to quaternary structure, heptamer of 7 subunits arranged in a ring. Interacts with the chaperonin GroEL.

The protein localises to the cytoplasm. Together with the chaperonin GroEL, plays an essential role in assisting protein folding. The GroEL-GroES system forms a nano-cage that allows encapsulation of the non-native substrate proteins and provides a physical environment optimized to promote and accelerate protein folding. GroES binds to the apical surface of the GroEL ring, thereby capping the opening of the GroEL channel. The sequence is that of Co-chaperonin GroES from Vibrio campbellii (strain ATCC BAA-1116).